We begin with the raw amino-acid sequence, 431 residues long: O-methyltransferase gliM (431 aa).

The stretch at 20–85 forms a coiled coil; that stretch reads EFKAIVNDLR…SMDKLQLQLV (66 aa). S-adenosyl-L-methionine is bound by residues D287 and 319–321; that span reads GDF. The active-site Proton acceptor is the H338.

It belongs to the class I-like SAM-binding methyltransferase superfamily. Cation-independent O-methyltransferase family. COMT subfamily.

Its pathway is mycotoxin biosynthesis. Functionally, O-methyltransferase; part of the gene cluster that mediates the biosynthesis of gliotoxin, a member of the epipolythiodioxopiperazine (ETP) class of toxins characterized by a disulfide bridged cyclic dipeptide. The first step in gliotoxin biosynthesis is the condensation of serine and phenylalanine to form the cyclo-L-phenylalanyl-L-serine diketopiperazine (DKP) by the NRPS gliP. GliP is also able to produce the DKP cyclo-L-tryptophanyl-L-serine, suggesting that the substrate specificity of the first adenylation (A) domain in gliP is sufficiently relaxed to accommodate both L-Phe and L-Trp. The cytochrome P450 monooxygenase gliC has been shown to catalyze the subsequent hydroxylation of the alpha-carbon of L-Phe in cyclo-L-phenylalanyl-L-serine whereas the second cytochrome P450 enzyme, gliF, is presumably involved in the modification of the DKP side chain. The glutathione S-transferase (GST) gliG then forms a bis-glutathionylated biosynthetic intermediate which is responsible for the sulfurization of gliotoxin. This bis-glutathionylated intermediate is subsequently processed by the gamma-glutamyl cyclotransferase gliK to remove both gamma-glutamyl moieties. Subsequent processing via gliI yields a biosynthetic intermediate, which is N-methylated via the N-methyltransferase gliN, before the gliotoxin oxidoreductase gliT-mediated disulfide bridge closure. GliN-mediated amide methylation confers stability to ETP, damping the spontaneous formation of tri- and tetrasulfides. Intracellular dithiol gliotoxin oxidized by gliT is subsequently effluxed by gliA. Gliotoxin contributes to pathogenesis during invasive aspergillosis. In macrophages and neutrophils, gliotoxin showed inhibition of various different cell functions including cytokine production, antigen presentation, phagocytosis, and production of reactive oxygen species. In Aspergillus fumigatus (strain ATCC MYA-4609 / CBS 101355 / FGSC A1100 / Af293) (Neosartorya fumigata), this protein is O-methyltransferase gliM.